Reading from the N-terminus, the 298-residue chain is MPPPFVVTLTTSAQNNLRDQLKEKNFIFSQPQNTVFQARSNTVTCTLYPSGKLVIQGKGSEEFIEFFLEPEILHTFTHARVEQDLRPRLGVDESGKGDFFGPLCIAAVYASNAEILKKLYENKVQDSKNLKDTKIASLARIIRSLCVCDVIILYPEKYNELYGKFQNLNTLLAWAHATVINNLAPKPAGDVFAISDQFAASEYTLLKALQKKETDITLIQKPRAEQDVVVAAASILARDAFVQSIQKLEEQYQVQLPKGAGFNVKAAGREIAKQRGKELLAKISKTHFKTFDEICSGK.

Residues 86–298 form the RNase H type-2 domain; it reads RPRLGVDESG…KTFDEICSGK (213 aa). 3 residues coordinate a divalent metal cation: Asp-92, Glu-93, and Asp-196.

This sequence belongs to the RNase HII family. RnhC subfamily. Mn(2+) serves as cofactor. The cofactor is Mg(2+).

Its subcellular location is the cytoplasm. The enzyme catalyses Endonucleolytic cleavage to 5'-phosphomonoester.. Functionally, endonuclease that specifically degrades the RNA of RNA-DNA hybrids. The chain is Ribonuclease HIII (rnhC) from Chlamydia pneumoniae (Chlamydophila pneumoniae).